Here is a 190-residue protein sequence, read N- to C-terminus: Pyridoxal 5'-phosphate synthase subunit PdxT (190 aa).

L-glutamine is bound at residue 46 to 48 (GES). The Nucleophile role is filled by cysteine 78. L-glutamine is bound by residues arginine 106 and 135 to 136 (IR). Residues histidine 171 and glutamate 173 each act as charge relay system in the active site.

Belongs to the glutaminase PdxT/SNO family. In terms of assembly, in the presence of PdxS, forms a dodecamer of heterodimers. Only shows activity in the heterodimer.

The enzyme catalyses aldehydo-D-ribose 5-phosphate + D-glyceraldehyde 3-phosphate + L-glutamine = pyridoxal 5'-phosphate + L-glutamate + phosphate + 3 H2O + H(+). The catalysed reaction is L-glutamine + H2O = L-glutamate + NH4(+). The protein operates within cofactor biosynthesis; pyridoxal 5'-phosphate biosynthesis. Its function is as follows. Catalyzes the hydrolysis of glutamine to glutamate and ammonia as part of the biosynthesis of pyridoxal 5'-phosphate. The resulting ammonia molecule is channeled to the active site of PdxS. This chain is Pyridoxal 5'-phosphate synthase subunit PdxT, found in Dictyoglomus turgidum (strain DSM 6724 / Z-1310).